The sequence spans 78 residues: Sec-independent protein translocase protein TatA (78 aa).

Residues 1-21 (MFGRIGLPEILLILAIALIIF) form a helical membrane-spanning segment. Residues 50–78 (EVNEVEEEVKENKSSDVKENEDNKTEKST) are disordered. The span at 59–78 (KENKSSDVKENEDNKTEKST) shows a compositional bias: basic and acidic residues.

The protein belongs to the TatA/E family. Forms a complex with TatC.

Its subcellular location is the cell membrane. Functionally, part of the twin-arginine translocation (Tat) system that transports large folded proteins containing a characteristic twin-arginine motif in their signal peptide across membranes. TatA could form the protein-conducting channel of the Tat system. The sequence is that of Sec-independent protein translocase protein TatA from Natranaerobius thermophilus (strain ATCC BAA-1301 / DSM 18059 / JW/NM-WN-LF).